The sequence spans 824 residues: Molybdenum cofactor sulfurase (824 aa).

Position 274 is an N6-(pyridoxal phosphate)lysine (K274). Residue C433 is part of the active site. One can recognise an MOSC domain in the interval 655 to 822 (CSSSKYRSCT…LQVGQQVYPS (168 aa)).

The protein belongs to the class-V pyridoxal-phosphate-dependent aminotransferase family. MOCOS subfamily. The cofactor is pyridoxal 5'-phosphate.

The enzyme catalyses Mo-molybdopterin + L-cysteine + AH2 = thio-Mo-molybdopterin + L-alanine + A + H2O. It functions in the pathway cofactor biosynthesis; molybdopterin biosynthesis. Sulfurates the molybdenum cofactor. Sulfation of molybdenum is essential for xanthine dehydrogenase (XDH) and aldehyde oxidase (ADO) enzymes in which molybdenum cofactor is liganded by 1 oxygen and 1 sulfur atom in active form. In Oryza sativa subsp. japonica (Rice), this protein is Molybdenum cofactor sulfurase (MCSU3).